The primary structure comprises 1152 residues: Syntaxin-binding protein 5 (1152 aa).

A disordered region spans residues 14–35 (TAGSSSASQQQQQQQHPPGNRE). Positions 17-28 (SSSASQQQQQQQ) are enriched in low complexity. WD repeat units follow at residues 62-95 (SALA…CYCQ), 102-141 (VIQL…SLKF), 146-182 (VTFC…GYVI), 201-235 (HISD…DYRY), 241-273 (IHSV…PTKP), 295-337 (PILK…KSTA), 345-379 (IVDF…LIDL), 401-478 (TCCE…YKLK), 506-620 (QIIS…ELVI), and 634-696 (TSLA…SGAG). Disordered regions lie at residues 557-596 (TPEG…GLRD) and 675-731 (SNDP…QKVN). S693 carries the post-translational modification Phosphoserine. Residues 713–722 (SPTSGSSSPH) show a composition bias toward low complexity. Residue S724 is modified to Phosphoserine; by PKA. S760 bears the Phosphoserine mark. A Phosphothreonine modification is found at T763. A Phosphoserine modification is found at S783. T785 bears the Phosphothreonine mark. S786 carries the post-translational modification Phosphoserine. WD repeat units lie at residues 795–852 (ISAL…SGTI), 861–935 (RMAF…QNCA), 940–984 (ITET…LDVY), and 998–1021 (CFAN…TYSQ). Residues 879–893 (WTEHNVPEEKDEKEK) are compositionally biased toward basic and acidic residues. Residues 879 to 907 (WTEHNVPEEKDEKEKLKKRRPVSVSPSSS) form a disordered region. A phosphoserine mark is found at S901 and S903. The residue at position 1040 (T1040) is a Phosphothreonine. Phosphoserine occurs at positions 1059 and 1132. The v-SNARE coiled-coil homology domain occupies 1087-1147 (GIEGVKGAAS…HEMMLKYKDK (61 aa)).

The protein belongs to the WD repeat L(2)GL family. In terms of assembly, part of a complex that contains STXBP5, STX4A and SNAP23. Interacts with STX1A and STX4A via its v-SNARE homology domain. Part of a complex that contains STX1, STXBP5, SNAP25 and SYT1. In terms of processing, phosphorylation by PKA reduces interaction with STX1A and enhances synaptic neurotransmitter release. As to expression, isoform 1 is detected in heart, brain, lung, liver, skeletal muscle, kidney and testis. Isoform 2 is detected in brain and in testis. Isoform 3 is detected in testis.

The protein localises to the cytoplasm. Its subcellular location is the cell membrane. It localises to the cytoplasmic vesicle membrane. The protein resides in the synapse. It is found in the cytoplasmic vesicle. The protein localises to the secretory vesicle. Its subcellular location is the synaptic vesicle. Functionally, inhibits translocation of GLUT4 from intracellular vesicles to the plasma membrane. Plays a regulatory role in calcium-dependent exocytosis and neurotransmitter release. Inhibits membrane fusion between transport vesicles and the plasma membrane. May modulate the assembly of trans-SNARE complexes between transport vesicles and the plasma membrane. Competes with STXBP1 for STX1 binding. The polypeptide is Syntaxin-binding protein 5 (Stxbp5) (Rattus norvegicus (Rat)).